The sequence spans 250 residues: UPF0736 protein RBAM_011410 (250 aa).

It belongs to the UPF0736 family.

The chain is UPF0736 protein RBAM_011410 from Bacillus velezensis (strain DSM 23117 / BGSC 10A6 / LMG 26770 / FZB42) (Bacillus amyloliquefaciens subsp. plantarum).